The primary structure comprises 499 residues: Bifunctional purine biosynthesis protein PurH (499 aa).

Residues 1–144 (MIKRALISVF…KNFQDVVVLT (144 aa)) form the MGS-like domain.

The protein belongs to the PurH family.

It catalyses the reaction (6R)-10-formyltetrahydrofolate + 5-amino-1-(5-phospho-beta-D-ribosyl)imidazole-4-carboxamide = 5-formamido-1-(5-phospho-D-ribosyl)imidazole-4-carboxamide + (6S)-5,6,7,8-tetrahydrofolate. The enzyme catalyses IMP + H2O = 5-formamido-1-(5-phospho-D-ribosyl)imidazole-4-carboxamide. It functions in the pathway purine metabolism; IMP biosynthesis via de novo pathway; 5-formamido-1-(5-phospho-D-ribosyl)imidazole-4-carboxamide from 5-amino-1-(5-phospho-D-ribosyl)imidazole-4-carboxamide (10-formyl THF route): step 1/1. Its pathway is purine metabolism; IMP biosynthesis via de novo pathway; IMP from 5-formamido-1-(5-phospho-D-ribosyl)imidazole-4-carboxamide: step 1/1. The chain is Bifunctional purine biosynthesis protein PurH from Clostridium acetobutylicum (strain ATCC 824 / DSM 792 / JCM 1419 / IAM 19013 / LMG 5710 / NBRC 13948 / NRRL B-527 / VKM B-1787 / 2291 / W).